The following is a 94-amino-acid chain: Co-chaperonin GroES (94 aa).

Belongs to the GroES chaperonin family. As to quaternary structure, heptamer of 7 subunits arranged in a ring. Interacts with the chaperonin GroEL.

It is found in the cytoplasm. In terms of biological role, together with the chaperonin GroEL, plays an essential role in assisting protein folding. The GroEL-GroES system forms a nano-cage that allows encapsulation of the non-native substrate proteins and provides a physical environment optimized to promote and accelerate protein folding. GroES binds to the apical surface of the GroEL ring, thereby capping the opening of the GroEL channel. The sequence is that of Co-chaperonin GroES from Lactobacillus helveticus (strain DPC 4571).